The chain runs to 438 residues: Lipid-A-disaccharide synthase (438 aa).

It belongs to the LpxB family.

The enzyme catalyses a lipid X + a UDP-2-N,3-O-bis[(3R)-3-hydroxyacyl]-alpha-D-glucosamine = a lipid A disaccharide + UDP + H(+). It functions in the pathway bacterial outer membrane biogenesis; LPS lipid A biosynthesis. In terms of biological role, condensation of UDP-2,3-diacylglucosamine and 2,3-diacylglucosamine-1-phosphate to form lipid A disaccharide, a precursor of lipid A, a phosphorylated glycolipid that anchors the lipopolysaccharide to the outer membrane of the cell. The polypeptide is Lipid-A-disaccharide synthase (Xanthomonas campestris pv. campestris (strain 8004)).